A 129-amino-acid chain; its full sequence is Large ribosomal subunit protein bL12 (129 aa).

The protein belongs to the bacterial ribosomal protein bL12 family. As to quaternary structure, homodimer. Part of the ribosomal stalk of the 50S ribosomal subunit. Forms a multimeric L10(L12)X complex, where L10 forms an elongated spine to which 2 to 4 L12 dimers bind in a sequential fashion. Binds GTP-bound translation factors.

Forms part of the ribosomal stalk which helps the ribosome interact with GTP-bound translation factors. Is thus essential for accurate translation. This Treponema pallidum (strain Nichols) protein is Large ribosomal subunit protein bL12.